A 98-amino-acid polypeptide reads, in one-letter code: MISNAATSTPDRLTSTVRKTYPNFKVIVLNDDFNTFQHVSDCLLKYIPGMTGDRAWELTNQVHFDGLAIVWVGPQEQAELYHQQLRREGLTMAPLEKA.

This sequence belongs to the ClpS family. Binds to the N-terminal domain of the chaperone ClpA.

Involved in the modulation of the specificity of the ClpAP-mediated ATP-dependent protein degradation. The protein is ATP-dependent Clp protease adapter protein ClpS of Synechocystis sp. (strain ATCC 27184 / PCC 6803 / Kazusa).